Here is a 383-residue protein sequence, read N- to C-terminus: Glutaminyl-peptide cyclotransferase-like protein (383 aa).

A helical membrane pass occupies residues 33–53; the sequence is VQFLPLLLLALAMGLAFYIVW. Cys168 and Cys192 are oxidised to a cystine. Asp187 contacts Zn(2+). The Proton acceptor role is filled by Glu226. Glu227 contributes to the Zn(2+) binding site. Residue Asp270 is the Proton acceptor of the active site. Zn(2+) is bound at residue His352.

This sequence belongs to the glutaminyl-peptide cyclotransferase family. In terms of tissue distribution, detected in thalamus, hippocampus, brain cortex, cerebellum, kidney, lung and liver, and at low levels in heart and spleen.

The protein resides in the golgi apparatus membrane. The catalysed reaction is N-terminal L-glutaminyl-[peptide] = N-terminal 5-oxo-L-prolyl-[peptide] + NH4(+). Its function is as follows. Responsible for the biosynthesis of pyroglutamyl peptides. The polypeptide is Glutaminyl-peptide cyclotransferase-like protein (Qpctl) (Mus musculus (Mouse)).